A 354-amino-acid polypeptide reads, in one-letter code: S-adenosylmethionine:tRNA ribosyltransferase-isomerase (354 aa).

This sequence belongs to the QueA family. As to quaternary structure, monomer.

Its subcellular location is the cytoplasm. The enzyme catalyses 7-aminomethyl-7-carbaguanosine(34) in tRNA + S-adenosyl-L-methionine = epoxyqueuosine(34) in tRNA + adenine + L-methionine + 2 H(+). The protein operates within tRNA modification; tRNA-queuosine biosynthesis. Functionally, transfers and isomerizes the ribose moiety from AdoMet to the 7-aminomethyl group of 7-deazaguanine (preQ1-tRNA) to give epoxyqueuosine (oQ-tRNA). The sequence is that of S-adenosylmethionine:tRNA ribosyltransferase-isomerase from Salmonella heidelberg (strain SL476).